The sequence spans 493 residues: Growth-regulating factor 8 (493 aa).

In terms of domain architecture, QLQ spans 149 to 184 (AFSEAQWHELERQRNIYKYMMASVPVPPELLTPFPK). The 45-residue stretch at 243 to 287 (DLEPWRCKRTDGKKWRCSRNVIPDQKYCERHTHKSRPRSRKHVES) folds into the WRC domain. 2 consecutive short sequence motifs (bipartite nuclear localization signal) follow at residues 248-258 (RCKRTDGKKWR) and 276-283 (KSRPRSRK). The interval 270–302 (CERHTHKSRPRSRKHVESSHQSSHHNDIRTAKN) is disordered. Residues 273–283 (HTHKSRPRSRK) are compositionally biased toward basic residues.

This sequence belongs to the GRF family. As to expression, predominantly expressed in shoot tips and flowers.

The protein resides in the nucleus. Its function is as follows. Transcription activator that plays a role in the regulation of cell expansion in leaf and cotyledons tissues. Component of a network formed by miR396, the GRFs and their interacting factors (GIFs) acting in the regulation of meristem function, at least partially through the control of cell proliferation. The polypeptide is Growth-regulating factor 8 (GRF8) (Arabidopsis thaliana (Mouse-ear cress)).